The sequence spans 499 residues: Putative sodium-dependent excitatory amino acid transporter glt-4 (499 aa).

Residues 1–7 lie on the Cytoplasmic side of the membrane; that stretch reads MAKLSKE. Helical transmembrane passes span 8 to 28, 50 to 70, and 87 to 107; these read NLLL…GFSL, FVQM…ITSL, and IYYT…VSVI. An N-linked (GlcNAc...) asparagine glycan is attached at N165. 3 helical membrane-spanning segments follow: residues 194–217, 227–254, and 276–297; these read VSDG…IGVI, FFKS…TFLI, and ITVI…CVVL. The segment at residues 303 to 333 is an intramembrane region (discontinuously helical); it reads IKFVGGMAQALLTALATSSSSATLPLSIKCC. 320–322 contacts L-aspartate; it reads SSS. The helical transmembrane segment at 343–369 threads the bilayer; it reads VTRFVLPLGATINMDGTALYEAVAAIY. Positions 351, 353, and 355 each coordinate Na(+). Residues T359, 400–404, D433, and N440 each bind L-aspartate; that span reads IPQAG. An intramembrane region (discontinuously helical) is located at residues 383–416; sequence VVLVSLTATLASIGAAGIPQAGIVTMIMVLIAIG. The helical transmembrane segment at 430 to 451 threads the bilayer; that stretch reads FMLDRLRTTVNVHGDSIATAVI. Na(+) is bound by residues N440 and D444.

It belongs to the dicarboxylate/amino acid:cation symporter (DAACS) (TC 2.A.23) family.

Its subcellular location is the cell membrane. Sodium-dependent, high-affinity amino acid transporter that mediates the uptake of L-glutamate and also L-aspartate and D-aspartate. Functions as a symporter that transports one amino acid molecule together with two or three Na(+) ions and one proton, in parallel with the counter-transport of one K(+) ion. Mediates Cl(-) flux that is not coupled to amino acid transport; this avoids the accumulation of negative charges due to aspartate and Na(+) symport. The polypeptide is Putative sodium-dependent excitatory amino acid transporter glt-4 (glt-4) (Caenorhabditis elegans).